Consider the following 288-residue polypeptide: Polyamine aminopropyltransferase (288 aa).

The PABS domain maps to 11–245 (IEWYPRGYGV…SPWSFLVGVK (235 aa)). Gln36 contacts S-methyl-5'-thioadenosine. His67 and Asp91 together coordinate spermidine. Residues Glu111 and 148–149 (DG) each bind S-methyl-5'-thioadenosine. Asp166 serves as the catalytic Proton acceptor. 166–169 (DSTD) contributes to the spermidine binding site. Pro173 serves as a coordination point for S-methyl-5'-thioadenosine.

The protein belongs to the spermidine/spermine synthase family. Homodimer or homotetramer.

Its subcellular location is the cytoplasm. It carries out the reaction S-adenosyl 3-(methylsulfanyl)propylamine + agmatine = N(1)-(3-aminopropyl)agmatine + S-methyl-5'-thioadenosine + H(+). The enzyme catalyses S-adenosyl 3-(methylsulfanyl)propylamine + putrescine = S-methyl-5'-thioadenosine + spermidine + H(+). It catalyses the reaction cadaverine + S-adenosyl 3-(methylsulfanyl)propylamine = aminopropylcadaverine + S-methyl-5'-thioadenosine + H(+). The protein operates within amine and polyamine biosynthesis; spermidine biosynthesis; spermidine from putrescine: step 1/1. Functionally, involved in the biosynthesis of polyamines which are thought to support the growth of thermophilic microorganisms under high-temperature conditions. It seems that long-chain and branched-chain of polyamines effectively stabilize DNA and RNA, respectively. Catalyzes the irreversible transfer of a propylamine group from the amino donor S-adenosylmethioninamine (decarboxy-AdoMet) to agmatine to yield N1-aminopropylagmatine. It can also use cadaverine (1,5-diaminopentane) and putrescine (1,4-diaminobutane) as substrate with a lower activity than that of agmatine. The reaction involves a nucleophilic attack on the C-3 methylene of the propylamine moiety adjacent to the positively charged sulfur of decarboxy-AdoMet. This is Polyamine aminopropyltransferase from Thermococcus kodakarensis (strain ATCC BAA-918 / JCM 12380 / KOD1) (Pyrococcus kodakaraensis (strain KOD1)).